Here is a 287-residue protein sequence, read N- to C-terminus: MPTIHYHISDLRVALRPYRTAQRIALVPTMGNLHDGHLELVKIAKQHADIVVVSIFVNPTQFGVGEDFDSYPRTLDEDVAKLAMVGADYVFAPTIDEMYPVLPPPTTILAGTITEQLCGKTRPNHFDGVGIVVSKLFNIVQPNIAVFGQKDYQQLAIIKQLVRDLSYSIDIIGAPIIRATDGLALSSRNQYLSESERQTAPILQQELQYSAKQISDNKQPLEVLLTAAHERITSAGFIIDYLEVKTTELTAVDDESINNHQDLVILVAAWLGRARLLDNRLVTINKV.

Residue 30 to 37 (MGNLHDGH) coordinates ATP. His37 (proton donor) is an active-site residue. Residue Gln61 participates in (R)-pantoate binding. Gln61 contacts beta-alanine. 148–151 (GQKD) contacts ATP. Gln154 is a binding site for (R)-pantoate. ATP contacts are provided by residues Ile177 and 185–188 (LSSR).

The protein belongs to the pantothenate synthetase family. In terms of assembly, homodimer.

The protein localises to the cytoplasm. The catalysed reaction is (R)-pantoate + beta-alanine + ATP = (R)-pantothenate + AMP + diphosphate + H(+). The protein operates within cofactor biosynthesis; (R)-pantothenate biosynthesis; (R)-pantothenate from (R)-pantoate and beta-alanine: step 1/1. Its function is as follows. Catalyzes the condensation of pantoate with beta-alanine in an ATP-dependent reaction via a pantoyl-adenylate intermediate. The protein is Pantothenate synthetase of Psychrobacter cryohalolentis (strain ATCC BAA-1226 / DSM 17306 / VKM B-2378 / K5).